Consider the following 142-residue polypeptide: MMNYRHILVMIDLSPDSYSLIHKASFISNLHNDAKISLIYVNTDYSDAYTGLIDVDIRNIQSYRLQDINNMLKNLKNYIYFPVHKVFIGNGDMTSCLLDVTQKYNIDLIIFGHYQDFWSKIVFSLRQIINSLHIDMLIVPFY.

The protein belongs to the universal stress protein A family. Homodimer.

It is found in the cytoplasm. Its function is as follows. Required for resistance to DNA-damaging agents. This chain is Universal stress protein A (uspA), found in Buchnera aphidicola subsp. Baizongia pistaciae (strain Bp).